A 495-amino-acid polypeptide reads, in one-letter code: Chromosomal replication initiator protein DnaA (495 aa).

The interval 1–91 is domain I, interacts with DnaA modulators; that stretch reads MTADPDPPFV…ITALSRHLGQ (91 aa). Residues 91–154 are domain II; the sequence is QRVELGVRIA…TPAAEDPNAV (64 aa). A domain III, AAA+ region region spans residues 155-371; that stretch reads SLNRRYTFDT…GALIRVTAFA (217 aa). The ATP site is built by Gly199, Gly201, Lys202, and Thr203. Residues 372-495 form a domain IV, binds dsDNA region; that stretch reads SLNKTPIDKS…TTRIRQRAKR (124 aa).

The protein belongs to the DnaA family. In terms of assembly, oligomerizes as a right-handed, spiral filament on DNA at oriC.

It is found in the cytoplasm. In terms of biological role, plays an essential role in the initiation and regulation of chromosomal replication. ATP-DnaA binds to the origin of replication (oriC) to initiate formation of the DNA replication initiation complex once per cell cycle. Binds the DnaA box (a 9 base pair repeat at the origin) and separates the double-stranded (ds)DNA. Forms a right-handed helical filament on oriC DNA; dsDNA binds to the exterior of the filament while single-stranded (ss)DNA is stabiized in the filament's interior. The ATP-DnaA-oriC complex binds and stabilizes one strand of the AT-rich DNA unwinding element (DUE), permitting loading of DNA polymerase. After initiation quickly degrades to an ADP-DnaA complex that is not apt for DNA replication. Binds acidic phospholipids. The sequence is that of Chromosomal replication initiator protein DnaA from Mycobacterium sp. (strain JLS).